Reading from the N-terminus, the 170-residue chain is Mitochondrial fission 1 protein A (170 aa).

A TPR repeat occupies R90–W123. Residues V142–I162 traverse the membrane as a helical segment.

It belongs to the FIS1 family. Interacts with ARC5.

Its subcellular location is the mitochondrion outer membrane. The protein resides in the peroxisome membrane. In terms of biological role, component of the peroxisomal and mitochondrial division machineries. Plays a role in promoting the fission of mitochondria and peroxisomes. This Arabidopsis thaliana (Mouse-ear cress) protein is Mitochondrial fission 1 protein A (FIS1A).